A 68-amino-acid chain; its full sequence is uncharacterized protein (68 aa).

A disordered region spans residues 1–42; the sequence is MHLCQNGHYYKPHRASAEKVPYLKKKKKNSRNEGKAKKKNEK.

This is an uncharacterized protein from Saccharomyces cerevisiae (strain ATCC 204508 / S288c) (Baker's yeast).